The following is a 210-amino-acid chain: Proteasome subunit beta (210 aa).

A propeptide spans methionine 1–glycine 9 (removed in mature form; by autocatalysis). Catalysis depends on threonine 10, which acts as the Nucleophile.

It belongs to the peptidase T1B family. In terms of assembly, the 20S proteasome core is composed of 14 alpha and 14 beta subunits that assemble into four stacked heptameric rings, resulting in a barrel-shaped structure. The two inner rings, each composed of seven catalytic beta subunits, are sandwiched by two outer rings, each composed of seven alpha subunits. The catalytic chamber with the active sites is on the inside of the barrel. Has a gated structure, the ends of the cylinder being occluded by the N-termini of the alpha-subunits. Is capped at one or both ends by the proteasome regulatory ATPase, PAN.

Its subcellular location is the cytoplasm. It carries out the reaction Cleavage of peptide bonds with very broad specificity.. The formation of the proteasomal ATPase PAN-20S proteasome complex, via the docking of the C-termini of PAN into the intersubunit pockets in the alpha-rings, triggers opening of the gate for substrate entry. Interconversion between the open-gate and close-gate conformations leads to a dynamic regulation of the 20S proteasome proteolysis activity. Its function is as follows. Component of the proteasome core, a large protease complex with broad specificity involved in protein degradation. This chain is Proteasome subunit beta, found in Methanosarcina mazei (strain ATCC BAA-159 / DSM 3647 / Goe1 / Go1 / JCM 11833 / OCM 88) (Methanosarcina frisia).